A 658-amino-acid polypeptide reads, in one-letter code: Glycine--tRNA ligase beta subunit (658 aa).

This sequence belongs to the class-II aminoacyl-tRNA synthetase family. In terms of assembly, tetramer of two alpha and two beta subunits.

It localises to the cytoplasm. The enzyme catalyses tRNA(Gly) + glycine + ATP = glycyl-tRNA(Gly) + AMP + diphosphate. This is Glycine--tRNA ligase beta subunit from Rickettsia bellii (strain OSU 85-389).